A 306-amino-acid chain; its full sequence is MILKNKRMLKIGICVGILGLSITSLEAFTGESLQVEAKEKTGQVKHKNQATHKEFSQLEKKFDARLGVYAIDTGTNQTISYRPNERFAFASTYKALAAGVLLQQNSIDSLNEVITYTKEDLVDYSPVTEKHVDTGMKLGEIAEAAVRSSDNTAGNILFNKIGGPKGYEKALRHMGDRITMSNRFETELNEAIPGDIRDTSTAKAIATNLKAFTVGNALPAEKRKILTEWMKGNATGDKLIRAGIPTDWVVGDKSGAGSYGTRNDIAVVWPPNSAPIIVLISSKDEKEAIYNDQLIAEATKVIVKGS.

Positions 1–27 (MILKNKRMLKIGICVGILGLSITSLEA) are cleaved as a signal peptide. S91 (acyl-ester intermediate) is an active-site residue. E187 serves as the catalytic Proton acceptor. 253–255 (KSG) contributes to the substrate binding site.

The protein belongs to the class-A beta-lactamase family.

The enzyme catalyses a beta-lactam + H2O = a substituted beta-amino acid. This protein is a beta-lactamase with a substrate specificity for penicillins. The chain is Beta-lactamase 1 (blaY) from Bacillus cereus.